Here is a 365-residue protein sequence, read N- to C-terminus: 4-hydroxy-3-methylbut-2-en-1-yl diphosphate synthase (flavodoxin) (365 aa).

4 residues coordinate [4Fe-4S] cluster: Cys270, Cys273, Cys305, and Glu312.

Belongs to the IspG family. Requires [4Fe-4S] cluster as cofactor.

The catalysed reaction is (2E)-4-hydroxy-3-methylbut-2-enyl diphosphate + 2 oxidized [2Fe-2S]-[ferredoxin] + H2O = 2-C-methyl-D-erythritol 2,4-cyclic diphosphate + 2 reduced [2Fe-2S]-[ferredoxin] + H(+). It carries out the reaction (2E)-4-hydroxy-3-methylbut-2-enyl diphosphate + oxidized [flavodoxin] + H2O + 2 H(+) = 2-C-methyl-D-erythritol 2,4-cyclic diphosphate + reduced [flavodoxin]. The protein operates within isoprenoid biosynthesis; isopentenyl diphosphate biosynthesis via DXP pathway; isopentenyl diphosphate from 1-deoxy-D-xylulose 5-phosphate: step 5/6. Its function is as follows. Converts 2C-methyl-D-erythritol 2,4-cyclodiphosphate (ME-2,4cPP) into 1-hydroxy-2-methyl-2-(E)-butenyl 4-diphosphate. Involved in density-dependent regulation of 2'-N-acetyltransferase. The polypeptide is 4-hydroxy-3-methylbut-2-en-1-yl diphosphate synthase (flavodoxin) (Providencia stuartii).